Consider the following 303-residue polypeptide: L(+)-tartrate dehydratase subunit alpha (303 aa).

Residues Cys71, Cys190, and Cys277 each coordinate iron-sulfur cluster.

This sequence belongs to the class-I fumarase family. Tetramer of two alpha and two beta subunits. Requires iron-sulfur cluster as cofactor.

The enzyme catalyses (2R,3R)-tartrate = oxaloacetate + H2O. The polypeptide is L(+)-tartrate dehydratase subunit alpha (ttdA) (Escherichia coli O157:H7).